A 348-amino-acid polypeptide reads, in one-letter code: GMP reductase (348 aa).

Position 108 to 131 (108 to 131 (ADFQKTKDIMALSDELIFICVDIA)) interacts with NADP(+). K(+) contacts are provided by G181 and G183. The active-site Thioimidate intermediate is C186. 216–239 (IIGDGGCSCAGDVSKAFGGGADFV) provides a ligand contact to NADP(+).

The protein belongs to the IMPDH/GMPR family. GuaC type 1 subfamily. As to quaternary structure, homotetramer.

The catalysed reaction is IMP + NH4(+) + NADP(+) = GMP + NADPH + 2 H(+). Its function is as follows. Catalyzes the irreversible NADPH-dependent deamination of GMP to IMP. It functions in the conversion of nucleobase, nucleoside and nucleotide derivatives of G to A nucleotides, and in maintaining the intracellular balance of A and G nucleotides. The polypeptide is GMP reductase (Vibrio parahaemolyticus serotype O3:K6 (strain RIMD 2210633)).